Consider the following 210-residue polypeptide: ATP phosphoribosyltransferase (210 aa).

Belongs to the ATP phosphoribosyltransferase family. Short subfamily. In terms of assembly, heteromultimer composed of HisG and HisZ subunits.

The protein resides in the cytoplasm. The enzyme catalyses 1-(5-phospho-beta-D-ribosyl)-ATP + diphosphate = 5-phospho-alpha-D-ribose 1-diphosphate + ATP. It functions in the pathway amino-acid biosynthesis; L-histidine biosynthesis; L-histidine from 5-phospho-alpha-D-ribose 1-diphosphate: step 1/9. Functionally, catalyzes the condensation of ATP and 5-phosphoribose 1-diphosphate to form N'-(5'-phosphoribosyl)-ATP (PR-ATP). Has a crucial role in the pathway because the rate of histidine biosynthesis seems to be controlled primarily by regulation of HisG enzymatic activity. This chain is ATP phosphoribosyltransferase, found in Caldanaerobacter subterraneus subsp. tengcongensis (strain DSM 15242 / JCM 11007 / NBRC 100824 / MB4) (Thermoanaerobacter tengcongensis).